Here is a 121-residue protein sequence, read N- to C-terminus: NADH-ubiquinone oxidoreductase chain 3 (121 aa).

The next 3 membrane-spanning stretches (helical) occupy residues 11–31, 63–83, and 90–110; these read ILTF…LSYF, FYLV…LFPW, and LSIF…LGFI.

The protein belongs to the complex I subunit 3 family.

The protein resides in the mitochondrion membrane. The enzyme catalyses a ubiquinone + NADH + 5 H(+)(in) = a ubiquinol + NAD(+) + 4 H(+)(out). Functionally, core subunit of the mitochondrial membrane respiratory chain NADH dehydrogenase (Complex I) that is believed to belong to the minimal assembly required for catalysis. Complex I functions in the transfer of electrons from NADH to the respiratory chain. The immediate electron acceptor for the enzyme is believed to be ubiquinone. In Porphyra purpurea (Red seaweed), this protein is NADH-ubiquinone oxidoreductase chain 3 (NAD3).